The chain runs to 160 residues: Phosphopantetheine adenylyltransferase (160 aa).

A substrate-binding site is contributed by threonine 10. ATP is bound by residues 10-11 and histidine 18; that span reads TF. Substrate contacts are provided by lysine 42, leucine 74, and arginine 88. ATP is bound by residues 89–91, glutamate 99, and 124–130; these read GLR and NSFISST.

This sequence belongs to the bacterial CoaD family. As to quaternary structure, homohexamer. Mg(2+) is required as a cofactor.

The protein localises to the cytoplasm. It catalyses the reaction (R)-4'-phosphopantetheine + ATP + H(+) = 3'-dephospho-CoA + diphosphate. The protein operates within cofactor biosynthesis; coenzyme A biosynthesis; CoA from (R)-pantothenate: step 4/5. In terms of biological role, reversibly transfers an adenylyl group from ATP to 4'-phosphopantetheine, yielding dephospho-CoA (dPCoA) and pyrophosphate. This is Phosphopantetheine adenylyltransferase from Photobacterium damsela subsp. piscicida (Pasteurella piscicida).